The following is a 286-amino-acid chain: Tryptophan 2,3-dioxygenase (286 aa).

Residues 55–59 (FIIIH), Tyr-117, and Arg-121 each bind substrate. Residue His-244 coordinates heme. Residue Thr-258 participates in substrate binding.

Belongs to the tryptophan 2,3-dioxygenase family. Homotetramer. It depends on heme as a cofactor.

It catalyses the reaction L-tryptophan + O2 = N-formyl-L-kynurenine. It participates in amino-acid degradation; L-tryptophan degradation via kynurenine pathway; L-kynurenine from L-tryptophan: step 1/2. Its function is as follows. Heme-dependent dioxygenase that catalyzes the oxidative cleavage of the L-tryptophan (L-Trp) pyrrole ring and converts L-tryptophan to N-formyl-L-kynurenine. Catalyzes the oxidative cleavage of the indole moiety. This chain is Tryptophan 2,3-dioxygenase, found in Shewanella woodyi (strain ATCC 51908 / MS32).